A 510-amino-acid polypeptide reads, in one-letter code: ATP synthase subunit alpha (510 aa).

169 to 176 (GDRQTGKT) lines the ATP pocket.

The protein belongs to the ATPase alpha/beta chains family. In terms of assembly, F-type ATPases have 2 components, CF(1) - the catalytic core - and CF(0) - the membrane proton channel. CF(1) has five subunits: alpha(3), beta(3), gamma(1), delta(1), epsilon(1). CF(0) has three main subunits: a(1), b(2) and c(9-12). The alpha and beta chains form an alternating ring which encloses part of the gamma chain. CF(1) is attached to CF(0) by a central stalk formed by the gamma and epsilon chains, while a peripheral stalk is formed by the delta and b chains.

It localises to the cell inner membrane. The catalysed reaction is ATP + H2O + 4 H(+)(in) = ADP + phosphate + 5 H(+)(out). Functionally, produces ATP from ADP in the presence of a proton gradient across the membrane. The alpha chain is a regulatory subunit. The polypeptide is ATP synthase subunit alpha (Anaeromyxobacter sp. (strain K)).